The following is a 315-amino-acid chain: Adenine deaminase (315 aa).

His-14, His-16, and His-194 together coordinate Zn(2+). Glu-197 (proton donor) is an active-site residue. Residue Asp-275 coordinates Zn(2+). Asp-276 provides a ligand contact to substrate.

Belongs to the metallo-dependent hydrolases superfamily. Adenosine and AMP deaminases family. Adenine deaminase type 2 subfamily. Zn(2+) is required as a cofactor.

The catalysed reaction is adenine + H2O + H(+) = hypoxanthine + NH4(+). Its function is as follows. Catalyzes the hydrolytic deamination of adenine to hypoxanthine. Plays an important role in the purine salvage pathway and in nitrogen catabolism. This Pseudomonas putida (strain ATCC 47054 / DSM 6125 / CFBP 8728 / NCIMB 11950 / KT2440) protein is Adenine deaminase.